Here is a 1272-residue protein sequence, read N- to C-terminus: Protein diaphanous homolog 1 (1272 aa).

N-acetylmethionine is present on Met-1. Gly residues predominate over residues Met-1–Arg-12. Residues Met-1–Leu-84 form a disordered region. Phosphoserine is present on residues Ser-7, Ser-22, and Ser-36. The span at Leu-44–Asn-65 shows a compositional bias: basic and acidic residues. Residues Ala-67–Leu-84 are compositionally biased toward polar residues. A GBD/FH3 domain is found at Leu-84–Asp-449. A coiled-coil region spans residues Met-468–Val-572. The interval Pro-573–Phe-755 is disordered. 3 stretches are compositionally biased toward pro residues: residues Pro-574–Pro-589, Ile-596–Pro-622, and Ser-640–Pro-658. The FH1 domain maps to Pro-583–Pro-764. The segment covering Glu-659 to Ala-674 has biased composition (low complexity). The span at Ile-675 to Phe-753 shows a compositional bias: pro residues. Thr-768 carries the phosphothreonine modification. In terms of domain architecture, FH2 spans Pro-769–Lys-1171. The stretch at Asp-1039–Thr-1196 forms a coiled coil. 2 positions are modified to N6-acetyllysine: Lys-1057 and Lys-1103. Residue Tyr-1121 is modified to Phosphotyrosine. The 29-residue stretch at Asp-1194–Asn-1222 folds into the DAD domain. Ser-1251 and Ser-1254 each carry phosphoserine.

This sequence belongs to the formin homology family. Diaphanous subfamily. In terms of assembly, homodimer. Interacts with the GTP-bound form of RHOA. Interacts with RHOC, PFY1, MAPRE1 and BAIAP2. Interacts with APC; acts as a scaffold protein for MAPRE1 and APC to stabilize microtubules and promote cell migration. Interacts with SCAI. Interacts with DCAF7, via FH2 domain. Interacts with NCDN. Interacts with OSBPL10, OSBPL2, VIM, TUBB and DYN1. Post-translationally, phosphorylation at Thr-768 is stimulated by cAMP and regulates stability, complex formation and mitochondrial movement. Expressed in brain, heart, placenta, lung, kidney, pancreas, liver, skeletal muscle and cochlea. Expressed in platelets.

It localises to the cell membrane. The protein localises to the cell projection. Its subcellular location is the ruffle membrane. The protein resides in the cytoplasm. It is found in the cytoskeleton. It localises to the microtubule organizing center. The protein localises to the centrosome. Its subcellular location is the spindle. The protein resides in the nucleus. In terms of biological role, actin nucleation and elongation factor required for the assembly of F-actin structures, such as actin cables and stress fibers. Binds to the barbed end of the actin filament and slows down actin polymerization and depolymerization. Required for cytokinesis, and transcriptional activation of the serum response factor. DFR proteins couple Rho and Src tyrosine kinase during signaling and the regulation of actin dynamics. Functions as a scaffold protein for MAPRE1 and APC to stabilize microtubules and promote cell migration. Has neurite outgrowth promoting activity. Acts in a Rho-dependent manner to recruit PFY1 to the membrane. In hear cells, it may play a role in the regulation of actin polymerization in hair cells. The MEMO1-RHOA-DIAPH1 signaling pathway plays an important role in ERBB2-dependent stabilization of microtubules at the cell cortex. It controls the localization of APC and CLASP2 to the cell membrane, via the regulation of GSK3B activity. In turn, membrane-bound APC allows the localization of the MACF1 to the cell membrane, which is required for microtubule capture and stabilization. Plays a role in the regulation of cell morphology and cytoskeletal organization. Required in the control of cell shape. Plays a role in brain development. Also acts as an actin nucleation and elongation factor in the nucleus by promoting nuclear actin polymerization inside the nucleus to drive serum-dependent SRF-MRTFA activity. The polypeptide is Protein diaphanous homolog 1 (DIAPH1) (Homo sapiens (Human)).